The following is a 361-amino-acid chain: 5-formaminoimidazole-4-carboxamide-1-(beta)-D-ribofuranosyl 5'-monophosphate synthetase (361 aa).

2 residues coordinate 5-amino-1-(5-phospho-beta-D-ribosyl)imidazole-4-carboxamide: His-27 and Ser-94. The ATP-grasp domain maps to 116-348; it reads RAILRWEAER…MGQRIAKEIK (233 aa). ATP-binding positions include 146-208 and Glu-230; that span reads PDDI…ANYC. Asn-258 serves as a coordination point for 5-amino-1-(5-phospho-beta-D-ribosyl)imidazole-4-carboxamide. Mg(2+) contacts are provided by Gln-297 and Glu-310.

It belongs to the phosphohexose mutase family. Mg(2+) serves as cofactor. The cofactor is Mn(2+).

It carries out the reaction 5-amino-1-(5-phospho-beta-D-ribosyl)imidazole-4-carboxamide + formate + ATP = 5-formamido-1-(5-phospho-D-ribosyl)imidazole-4-carboxamide + ADP + phosphate. It functions in the pathway purine metabolism; IMP biosynthesis via de novo pathway; 5-formamido-1-(5-phospho-D-ribosyl)imidazole-4-carboxamide from 5-amino-1-(5-phospho-D-ribosyl)imidazole-4-carboxamide (formate route): step 1/1. Its function is as follows. Catalyzes the ATP- and formate-dependent formylation of 5-aminoimidazole-4-carboxamide-1-beta-d-ribofuranosyl 5'-monophosphate (AICAR) to 5-formaminoimidazole-4-carboxamide-1-beta-d-ribofuranosyl 5'-monophosphate (FAICAR) in the absence of folates. In Methanococcus maripaludis (strain C6 / ATCC BAA-1332), this protein is 5-formaminoimidazole-4-carboxamide-1-(beta)-D-ribofuranosyl 5'-monophosphate synthetase.